The chain runs to 337 residues: MTESAVCTGAVSAVKEVWEERIKKHHEDVKREKEFQHKLVRIWEDRVSLTKLKEKVTREDGRVILRIEKEEWKTLPSSLLKLNQLQEWQLHRTGLLKIPEFIGRFQHLIVLDLSRNTISEIPRGIGLLTRLQELILSYNKIKTVPKELSNCTSLEKLELAVNRDISDLPPELSKLLKLTHLDLSMNQFTTIPHAVLDMPALEWLDMGSNSLQQLPDSLDRMRSLHTLWLQRNEITCLPETIKNMKNLGTLVLSNNKLQDIPGCMEEMTNLRFVNFRDNPLRLEVTLPPSDNTDGEEEQELFGLQFMHAYIQESRRTEDQVNCLTQMPSSIHSDGESN.

9 LRR repeats span residues 84–105, 107–128, 130–152, 153–176, 177–198, 200–221, 223–244, 246–267, and 269–290; these read QLQE…IGRF, HLIV…IGLL, RLQE…SNCT, SLEK…SKLL, KLTH…VLDM, ALEW…LDRM, SLHT…IKNM, NLGT…MEEM, and NLRF…PPSD.

Interacts with MYH7 (via C-terminus). Expressed in heart and skeletal muscle.

The protein resides in the cytoplasm. Its subcellular location is the myofibril. It is found in the sarcomere. The protein localises to the m line. Functionally, component of the sarcomeric M-band which plays a role in myocyte response to biomechanical stress. May regulate expression of other M-band proteins via an SRF-dependent pathway. Important for normal contractile function in heart. The polypeptide is Leucine-rich repeat-containing protein 39 (Mus musculus (Mouse)).